A 347-amino-acid polypeptide reads, in one-letter code: MDAFFSTYVWPTAIMIGQSLLLLVALLLFIAYVLLADRKIWAAVQLRRGPNVVGPFGLFQSFADLLKFVFKEPVIPAGANKTIFLLAPLVSVTLALAAWAVIPLNANWVIANINVGILFVFAISSLEVYGIIMGGWASNSKYPFLGALRSAAQMVSYEVSIGFVIVTVLLCVGSLNLTDIVNAQNDGLGTMLGLPASFLDWHWLSLFPMFIIFFISALAETNRPPFDLPEAESELVAGFMVEYGSTPYMMFMLGEYAAICLMCALTTILFLGGWLPPVDIWLLNWVPGIIWFVLKASLVFFMFAMVKAFVPRYRYDQLMRLGWKVFLPLSLAMVVIVAFVLKLTGWA.

Transmembrane regions (helical) follow at residues 14–34 (IMIG…AYVL), 50–70 (PNVV…KFVF), 83–103 (IFLL…AVIP), 115–135 (VGIL…IMGG), 161–181 (IGFV…TDIV), 198–218 (FLDW…ISAL), 258–278 (AICL…LPPV), 286–306 (VPGI…FAMV), and 321–341 (LGWK…AFVL).

Belongs to the complex I subunit 1 family. As to quaternary structure, NDH-1 is composed of 14 different subunits. Subunits NuoA, H, J, K, L, M, N constitute the membrane sector of the complex.

It is found in the cell inner membrane. The catalysed reaction is a quinone + NADH + 5 H(+)(in) = a quinol + NAD(+) + 4 H(+)(out). In terms of biological role, NDH-1 shuttles electrons from NADH, via FMN and iron-sulfur (Fe-S) centers, to quinones in the respiratory chain. The immediate electron acceptor for the enzyme in this species is believed to be ubiquinone. Couples the redox reaction to proton translocation (for every two electrons transferred, four hydrogen ions are translocated across the cytoplasmic membrane), and thus conserves the redox energy in a proton gradient. This subunit may bind ubiquinone. The polypeptide is NADH-quinone oxidoreductase subunit H 1 (Rhizobium meliloti (strain 1021) (Ensifer meliloti)).